The chain runs to 141 residues: Alpha-lactalbumin (141 aa).

The signal sequence occupies residues 1-19 (MMSFVSLLVVGILFPAIQA). The C-type lysozyme domain occupies 20–141 (KQFTKCELSQ…KLDQWLCEKM (122 aa)). 4 disulfides stabilise this stretch: C25/C138, C47/C129, C80/C95, and C91/C109. Ca(2+) is bound by residues K97, D100, D102, D105, and D106.

It belongs to the glycosyl hydrolase 22 family. As to quaternary structure, lactose synthase (LS) is a heterodimer of a catalytic component, beta1,4-galactosyltransferase (beta4Gal-T1) and a regulatory component, alpha-lactalbumin (LA). Mammary gland specific. Secreted in milk.

It localises to the secreted. Regulatory subunit of lactose synthase, changes the substrate specificity of galactosyltransferase in the mammary gland making glucose a good acceptor substrate for this enzyme. This enables LS to synthesize lactose, the major carbohydrate component of milk. In other tissues, galactosyltransferase transfers galactose onto the N-acetylglucosamine of the oligosaccharide chains in glycoproteins. The chain is Alpha-lactalbumin (LALBA) from Sus scrofa (Pig).